A 490-amino-acid chain; its full sequence is uncharacterized protein (490 aa).

Low complexity predominate over residues 370–385; that stretch reads FSMKRPSSSSSSLSGS. Residues 370-406 form a disordered region; it reads FSMKRPSSSSSSLSGSWHGDTENSVKQSLASPSEASL. A compositionally biased stretch (polar residues) spans 391–406; it reads ENSVKQSLASPSEASL.

The protein resides in the cytoplasm. It localises to the nucleus. This is an uncharacterized protein from Schizosaccharomyces pombe (strain 972 / ATCC 24843) (Fission yeast).